Here is a 1075-residue protein sequence, read N- to C-terminus: MLRNGNEGMSTIPGFSQIQFEGFCRFINQGLAEELEKFPTIKDPDHEIAFQLFAKGYQLLEPSIKERNAVYESLTYSSELYVSARLIFGFDVQKQTISIGNIPIMNSLGTFIINGIYRIVINQILLSPGIYYRSELDHKGISIYTGTIISDWGGRSELAIDKKERIWARVSRKQKISILVLSSAMGSNLREILDNVSYPEIFLSFPNAKEKKRIESKEKAILEFYQQFACVGGDLVFSESLCEELQKKFFQQKCELGRVGRRNMNRRLNLDIPQNNTFLLPRDVLAATDHLIGMKFGTGILDDDDMNHLKNKRIRSVADLLQDQFGLALGRLQHAVQKTIRRVFIRQSKPTPQTLVTPTSTSILLITTYETFFGTYPLAQVFDQTNPLTQTVHGRKVSCLGPGGLTGRTASFRSRDIHPSHYGRICPIDTSEGINVGLTGSLAIHARIDHWWGSIESPFYEISEKAKEKKERQVVYLSPNRDEYYMIAAGNSLSLNQGIQEEQVVPARYRQEFLTIAWEQIHVRSIFPFQYFSIGGSLIPFIEHNDANRALMSSNMQRQAVPLSRSEKCIVGTGLERQTALDSRVSVIAEREGKIISSDSHKILLSSSGKTISIPLVAHRRSNKNTCMHQKPRVPRGKSIKKGQILAEGAATVGGELALGKNVLVAYMPWEGYNFEDAVLISERLVYEDIYTSFHIRKYEIQTDTTSQGSAEKITKQIPHLEEHLLRNLDRNGVVRLGSWVETGDILVGKLTPQIASESSYIAEAGLLRAIFGLEVSTSKETSLKLPIGGRGRVIDVKWIQRDPFDIMVRVYILQKREIKVGDKVAGRHGNKGIISKILPRQDMPYLQDGTPVDMVFNPLGVPSRMNVGQIFESSLGLAGDLLKKHYRIAPFDERYEQEASRKLVFSELYEASKQTKNPWVFEPEYPGKSRIFDGRTGDPFEQPVLIGKSYILKLIHQVDEKIHGRSTGPYSLVTQQPVRGRAKQGGQRIGEMEVWALEGFGVAHILQEILTYKSDHLIARQEILNATIWGKRVPNHEDPPESFRVLVRELRSLALELNHFLVSEKNFRVNREDV.

This sequence belongs to the RNA polymerase beta chain family. As to quaternary structure, in plastids the minimal PEP RNA polymerase catalytic core is composed of four subunits: alpha, beta, beta', and beta''. When a (nuclear-encoded) sigma factor is associated with the core the holoenzyme is formed, which can initiate transcription.

The protein localises to the plastid. The protein resides in the chloroplast. The enzyme catalyses RNA(n) + a ribonucleoside 5'-triphosphate = RNA(n+1) + diphosphate. DNA-dependent RNA polymerase catalyzes the transcription of DNA into RNA using the four ribonucleoside triphosphates as substrates. This Sorghum bicolor (Sorghum) protein is DNA-directed RNA polymerase subunit beta.